Consider the following 205-residue polypeptide: Probable GTP-binding protein EngB (205 aa).

One can recognise an EngB-type G domain in the interval Q29–S203. GTP is bound by residues G37–S44, G64–M68, D82–G85, T149–D152, and F182–S184. Mg(2+) is bound by residues S44 and T66.

This sequence belongs to the TRAFAC class TrmE-Era-EngA-EngB-Septin-like GTPase superfamily. EngB GTPase family. Mg(2+) is required as a cofactor.

Necessary for normal cell division and for the maintenance of normal septation. The sequence is that of Probable GTP-binding protein EngB from Coxiella burnetii (strain CbuK_Q154) (Coxiella burnetii (strain Q154)).